We begin with the raw amino-acid sequence, 223 residues long: Small ribosomal subunit protein uS3 (223 aa).

A KH type-2 domain is found at 39–107 (VREFLKQKLK…PVQVSVEEIR (69 aa)).

The protein belongs to the universal ribosomal protein uS3 family. In terms of assembly, part of the 30S ribosomal subunit. Forms a tight complex with proteins S10 and S14.

Functionally, binds the lower part of the 30S subunit head. Binds mRNA in the 70S ribosome, positioning it for translation. The sequence is that of Small ribosomal subunit protein uS3 from Methylococcus capsulatus (strain ATCC 33009 / NCIMB 11132 / Bath).